We begin with the raw amino-acid sequence, 516 residues long: L-amino acid oxidase (516 aa).

The first 18 residues, 1–18 (MNVFFMFSLLFLAALESC), serve as a signal peptide directing secretion. FAD contacts are provided by residues 61–62 (MS), 81–82 (EA), arginine 89, and 105–108 (GPMR). Arginine 108 is a binding site for substrate. The N-linked (GlcNAc...) asparagine glycan is linked to asparagine 190. FAD is bound at residue valine 279. N-linked (GlcNAc...) asparagine glycans are attached at residues asparagine 299 and asparagine 404. Cysteine 349 and cysteine 430 form a disulfide bridge. FAD-binding positions include glutamate 475 and 482–487 (GWIDST). A substrate-binding site is contributed by 482-483 (GW).

This sequence belongs to the flavin monoamine oxidase family. FIG1 subfamily. In terms of assembly, homodimer; non-covalently linked. FAD serves as cofactor. Post-translationally, N-glycosylated (14%). The enzymatic activity remains unchanged after deglycosylation. In terms of tissue distribution, expressed by the venom gland.

It localises to the secreted. The enzyme catalyses an L-alpha-amino acid + O2 + H2O = a 2-oxocarboxylate + H2O2 + NH4(+). The catalysed reaction is L-leucine + O2 + H2O = 4-methyl-2-oxopentanoate + H2O2 + NH4(+). It carries out the reaction L-phenylalanine + O2 + H2O = 3-phenylpyruvate + H2O2 + NH4(+). It catalyses the reaction L-tryptophan + O2 + H2O = indole-3-pyruvate + H2O2 + NH4(+). The enzyme catalyses L-methionine + O2 + H2O = 4-methylsulfanyl-2-oxobutanoate + H2O2 + NH4(+). The catalysed reaction is L-isoleucine + O2 + H2O = (S)-3-methyl-2-oxopentanoate + H2O2 + NH4(+). Inhibited by the substrate analog N-acetyl tryptophan. Catalyzes an oxidative deamination of predominantly hydrophobic and aromatic L-amino acids, thus producing hydrogen peroxide that may contribute to the diverse toxic effects of this enzyme. Is highly active on L-Met&gt;L-Leu&gt;L-Phe&gt;L-Trp=L-Ile. Binds to the cell surface and enables the production of highly localized concentration of hydrogen peroxide in or near the binding interfaces. Does not bind to phospholipids. Induces platelet-rich plasma aggregation, shows cytotoxic effects on some cancer cell lines (B16-F10 (mouse melanoma), PC12 (rat pheochromocytoma), MCF-7 and MDA-MB-231 (human breast carcinoma)) and shows antibacterial activities against both Gram-positive and Gram-negative bacteria. Also exhibits hemorrhage and edema. Does not show cytotoxicity on erythrocytes and peripheral blood mononuclear cells. Its effect on platelets is controversial, since it either induces aggregation or inhibits agonist-induced aggregation. These different effects are probably due to different experimental conditions. The sequence is that of L-amino acid oxidase from Cerastes cerastes (Horned desert viper).